We begin with the raw amino-acid sequence, 1443 residues long: ARF guanine-nucleotide exchange factor GNL1 (1443 aa).

Residues 554–743 (FVRKVKHIKK…SEIYHSIRHS (190 aa)) form the SEC7 domain. Glutamate 658 is a catalytic residue. Disordered stretches follow at residues 917–949 (DDPELSTSNLEQEKPSANPVPVVSQSQPSAMPR) and 1424–1443 (DQFQRRNAKPEDPPVPGNEV). A compositionally biased stretch (polar residues) spans 939-949 (VSQSQPSAMPR). Basic and acidic residues predominate over residues 1425–1435 (QFQRRNAKPED).

As to quaternary structure, homodimer.

It is found in the cytoplasm. The protein localises to the cytosol. It localises to the golgi apparatus membrane. Its function is as follows. Activates the ARF proteins by exchanging bound GDP for free GTP. Plays a role in vesicular protein sorting. Acts as the major regulator of retrograde Golgi to endoplasmic reticulum trafficking but is also involved in the endocytosis process. Could function redundantly with GNOM. Regulates vesicle trafficking required for the coordinated polar localization of auxin efflux carriers which in turn determines the direction of auxin flow. Mediates the endocytosis of PIN2 from plasma membrane to endosomal compartments. Required for maintenance of endoplasmic reticulum morphology. This is ARF guanine-nucleotide exchange factor GNL1 (GNL1) from Arabidopsis thaliana (Mouse-ear cress).